The chain runs to 100 residues: Large ribosomal subunit protein uL23 (100 aa).

The protein belongs to the universal ribosomal protein uL23 family. Part of the 50S ribosomal subunit. Contacts protein L29, and trigger factor when it is bound to the ribosome.

In terms of biological role, one of the early assembly proteins it binds 23S rRNA. One of the proteins that surrounds the polypeptide exit tunnel on the outside of the ribosome. Forms the main docking site for trigger factor binding to the ribosome. This Vibrio campbellii (strain ATCC BAA-1116) protein is Large ribosomal subunit protein uL23.